The sequence spans 448 residues: Beclin-1 (448 aa).

Met1 carries the N-acetylmethionine modification. Phosphoserine occurs at positions 14 and 29. The segment at 47–72 (TTAQAKPGESQEEEANSGEEPFIETR) is disordered. A phosphoserine; by AMPK mark is found at Ser88, Ser91, and Ser94. The BH3 signature appears at 106–125 (TMENLSRRLKVTGDLFDIMS). An interaction with BCL2 and BCL2L1 isoform Bcl-X(L) region spans residues 110 to 157 (LSRRLKVTGDLFDIMSGQTDVDHPLCEECTDTLLDQLDTQLNVTENEC). Thr117 bears the Phosphothreonine; by DAPK1 mark. The stretch at 140–267 (DTLLDQLDTQ…QLDKLKKTNV (128 aa)) forms a coiled coil. Residues 243–448 (DELKSVENQM…AWVSSQFYNK (206 aa)) are evolutionary conserved domain (ECD). Residues Lys400 and Lys435 each participate in a glycyl lysine isopeptide (Lys-Gly) (interchain with G-Cter in ubiquitin) cross-link. The required for membrane-association stretch occupies residues 423 to 448 (WTKALKFMLTNLKWGLAWVSSQFYNK).

This sequence belongs to the beclin family. A homodimeric form is proposed to exist; this metastable form readily transits to ATG14- or UVRAG-containing complexes with BECN1:UVRAG being more stable than BECN1:ATG14. Component of the PI3K (PI3KC3/PI3K-III/class III phosphatidylinositol 3-kinase) complex the core of which is composed of the catalytic subunit PIK3C3, the regulatory subunit PIK3R4 and BECN1 associating with additional regulatory/auxiliary subunits to form alternative complex forms. Alternative complex forms containing a fourth regulatory subunit in a mutually exclusive manner are PI3K complex I (PI3KC3-C1) containing ATG14, and PI3K complex II (PI3KC3-C2) containing UVRAG. PI3KC3-C1 displays a V-shaped architecture with PIK3R4 serving as a bridge between PIK3C3 and the ATG14:BECN1 subcomplex. Both, PI3KC3-C1 and PI3KC3-C2, can associate with further regulatory subunits, such as RUBCN, SH3GLB1/Bif-1 and AMBRA1. PI3KC3-C1 probably associates with PIK3CB. Forms a complex with PPP2CA and AMBRA1; AMBRA1 and BECN1 components of the complex regulate MYC stability via different pathways. Component of the complex, at least composed of LRPPRC, BECN1 and BCL2; the interactions prevent BECN1 from forming an autophagy-inducing complex with PIK3C3. Interacts with AMBRA1, GOPC, GRID2. Interacts with BCL2 and BCL2L1 isoform Bcl-X(L); the interaction inhibits BECN1 function in promoting autophagy by interfering with the formation of the PI3K complex. Interacts with cytosolic HMGB1; inhibits the interaction of BECN1 and BCL2 leading to promotion of autophagy. Interacts with USP10, USP13, DAPK1, RAB39A. Interacts with SLAMF1. Interacts with the poly-Gln domain of ATXN3; the interaction causes deubiquitination at Lys-400 and stabilizes BECN1. Interacts with VMP1. Interacts with TRIM5; the interaction causes activation of BECN1 by causing its dissociation from its inhibitors BCL2 and TAB2. Interacts with active ULK1 (phosphorylated on 'Ser-317') and MEFV simultaneously. Interacts with WDR81 and WDR91; negatively regulates the PI3 kinase/PI3K activity associated with endosomal membranes. Interacts with LAPTM4B; competes with EGFR for LAPTM4B binding; regulates EGFR activity. Interacts with TRIM50. Interacts with TRIM16. Interacts with ATG14; this interaction is increased in the absence of TMEM39A. Interacts with WASHC1; preventing interaction with AMBRA1 and the DCX(AMBRA1) complex and subsequent ubiquitination. Interacts with TRIM17. Interacts with BCL2L10/BCL-B (via BH1 domain). Interacts with SH3BGRL. Interacts with IRGM; enhancing BECN1-interacting partners and influencing the composition of the BECN1 complex. Interacts with ARMC3. Interacts with LRPPRC. In terms of processing, phosphorylation at Thr-117 by DAPK1 reduces its interaction with BCL2 and BCL2L1 and promotes induction of autophagy. In response to autophagic stimuli, phosphorylated at serine residues by AMPK in an ATG14-dependent manner, and this phosphorylation is critical for maximally efficient autophagy. Polyubiquitinated by NEDD4, both with 'Lys-11'- and 'Lys-63'-linkages. 'Lys-11'-linked polyubiquitination leads to degradation and is enhanced when the stabilizing interaction partner VPS34 is depleted. Deubiquitinated by USP10 and USP13, leading to stabilize the PIK3C3/VPS34-containing complexes. Polyubiquitinated at Lys-400 with 'Lys-48'-linkages. 'Lys-48'-linked polyubiquitination of Lys-400 leads to degradation. Deubiquitinated by ATXN3, leading to stabilization. Ubiquitinated at Lys-435 via 'Lys-63'-linkage by the DCX(AMBRA1) complex, thereby increasing the association between BECN1 and PIK3C3 to promote PIK3C3 activity. 'Lys-48'-linked ubiquitination by RNF216 leads to proteasomal degradation and autophagy inhibition. Post-translationally, proteolytically processed by caspases including CASP8 and CASP3; the C-terminal fragments lack autophagy-inducing capacity and are proposed to induce apoptosis. Thus the cleavage is proposed to be an determinant to switch from autophagy to apoptosis pathways affecting cellular homeostasis including viral infections and survival of tumor cells.

Its subcellular location is the cytoplasm. The protein resides in the golgi apparatus. It localises to the trans-Golgi network membrane. It is found in the endosome membrane. The protein localises to the endoplasmic reticulum membrane. Its subcellular location is the mitochondrion membrane. The protein resides in the cytoplasmic vesicle. It localises to the autophagosome. It is found in the mitochondrion. The protein localises to the nucleus. Functionally, plays a central role in autophagy. Acts as a core subunit of the PI3K complex that mediates formation of phosphatidylinositol 3-phosphate; different complex forms are believed to play a role in multiple membrane trafficking pathways: PI3KC3-C1 is involved in initiation of autophagosomes and PI3KC3-C2 in maturation of autophagosomes and endocytosis. Involved in regulation of degradative endocytic trafficking and required for the abscission step in cytokinesis, probably in the context of PI3KC3-C2. Essential for the formation of PI3KC3-C2 but not PI3KC3-C1 PI3K complex forms. Involved in endocytosis. May play a role in antiviral host defense. In terms of biological role, beclin-1-C 35 kDa localized to mitochondria can promote apoptosis; it induces the mitochondrial translocation of BAX and the release of proapoptotic factors. The sequence is that of Beclin-1 (Becn1) from Rattus norvegicus (Rat).